The primary structure comprises 129 residues: UPF0325 protein HCH_00487 (129 aa).

This sequence belongs to the UPF0325 family.

In Hahella chejuensis (strain KCTC 2396), this protein is UPF0325 protein HCH_00487.